A 253-amino-acid chain; its full sequence is Flagellar brake protein YcgR (253 aa).

The PilZ domain maps to 120–239 (QRRDFYRFAT…NEGLINRYVY (120 aa)).

The protein belongs to the YcgR family. Monomer. Interacts with the flagellar basal bodies.

The protein localises to the bacterial flagellum basal body. Acts as a flagellar brake, regulating swimming and swarming in a bis-(3'-5') cyclic diguanylic acid (c-di-GMP)-dependent manner. Binds 1 c-di-GMP dimer per subunit. Increasing levels of c-di-GMP lead to decreased motility. In Methylotenera mobilis (strain JLW8 / ATCC BAA-1282 / DSM 17540), this protein is Flagellar brake protein YcgR.